A 105-amino-acid polypeptide reads, in one-letter code: Large ribosomal subunit protein eL42 (105 aa).

The interval 28 to 57 (YKKGKDSLAAQGKRRYDRKQSGYGGQTKPV) is disordered.

It belongs to the eukaryotic ribosomal protein eL42 family.

The sequence is that of Large ribosomal subunit protein eL42 (RPL44) from Gossypium hirsutum (Upland cotton).